The chain runs to 254 residues: Thiazole synthase (254 aa).

Catalysis depends on K95, which acts as the Schiff-base intermediate with DXP. Residues G156, A182–G183, and N204–T205 each bind 1-deoxy-D-xylulose 5-phosphate.

This sequence belongs to the ThiG family. In terms of assembly, homotetramer. Forms heterodimers with either ThiH or ThiS.

Its subcellular location is the cytoplasm. The enzyme catalyses [ThiS sulfur-carrier protein]-C-terminal-Gly-aminoethanethioate + 2-iminoacetate + 1-deoxy-D-xylulose 5-phosphate = [ThiS sulfur-carrier protein]-C-terminal Gly-Gly + 2-[(2R,5Z)-2-carboxy-4-methylthiazol-5(2H)-ylidene]ethyl phosphate + 2 H2O + H(+). The protein operates within cofactor biosynthesis; thiamine diphosphate biosynthesis. In terms of biological role, catalyzes the rearrangement of 1-deoxy-D-xylulose 5-phosphate (DXP) to produce the thiazole phosphate moiety of thiamine. Sulfur is provided by the thiocarboxylate moiety of the carrier protein ThiS. In vitro, sulfur can be provided by H(2)S. The sequence is that of Thiazole synthase from Shewanella baltica (strain OS195).